A 1168-amino-acid chain; its full sequence is Transcription-repair-coupling factor (1168 aa).

The region spanning 633–794 (DMQKSRPMDR…MLGVRDLSVI (162 aa)) is the Helicase ATP-binding domain. 646-653 (GDVGYGKT) provides a ligand contact to ATP. The short motif at 747-750 (DEEQ) is the DEEQ box element. A Helicase C-terminal domain is found at 808 to 969 (VLEQNMSFIK…GFKIAMRDLN (162 aa)).

The protein in the N-terminal section; belongs to the UvrB family. It in the C-terminal section; belongs to the helicase family. RecG subfamily.

Its subcellular location is the cytoplasm. Functionally, couples transcription and DNA repair by recognizing RNA polymerase (RNAP) stalled at DNA lesions. Mediates ATP-dependent release of RNAP and its truncated transcript from the DNA, and recruitment of nucleotide excision repair machinery to the damaged site. The chain is Transcription-repair-coupling factor from Staphylococcus aureus (strain Mu50 / ATCC 700699).